A 296-amino-acid polypeptide reads, in one-letter code: Elongation factor Ts (296 aa).

Residues 79 to 82 are involved in Mg(2+) ion dislocation from EF-Tu; it reads TDFV.

It belongs to the EF-Ts family.

The protein resides in the cytoplasm. Its function is as follows. Associates with the EF-Tu.GDP complex and induces the exchange of GDP to GTP. It remains bound to the aminoacyl-tRNA.EF-Tu.GTP complex up to the GTP hydrolysis stage on the ribosome. This is Elongation factor Ts (tsf) from Spiroplasma citri.